The sequence spans 555 residues: 5'-nucleotidase-related protein (555 aa).

Residues 1 to 25 form the signal peptide; that stretch reads MKSLIGTLGLYCLFILTNNVVSSYG. Residues Asp-38, His-40, and Asp-91 each contribute to the a divalent metal cation site. Asn-105 carries N-linked (GlcNAc...) asparagine glycosylation. Asn-123 provides a ligand contact to a divalent metal cation. An N-linked (GlcNAc...) asparagine glycan is attached at Asn-198. A divalent metal cation-binding residues include His-225 and His-249. A glycan (N-linked (GlcNAc...) asparagine) is linked at Asn-295. Residues Arg-358, Arg-402, and Phe-421 each contribute to the AMP site. The N-linked (GlcNAc...) asparagine glycan is linked to Asn-465. AMP-binding residues include Phe-505 and Asp-511.

It belongs to the 5'-nucleotidase family. The cofactor is Mg(2+). Mn(2+) serves as cofactor. In terms of tissue distribution, salivary gland (at protein level). Saliva (at protein level).

It localises to the secreted. The enzyme catalyses a ribonucleoside 5'-triphosphate + 2 H2O = a ribonucleoside 5'-phosphate + 2 phosphate + 2 H(+). With respect to regulation, DEPC (2 mM), sodium fluoride (10 mM) and 4,4'-Diisothiocyano-2,2'-stilbenedisulfonic acid (DIDS, 100 uM) nearly completely abrogate activity. Concanavalin A enhances activity. Functionally, facilitates hematophagy by inhibiting ADP-dependent platelet aggregation and promoting disaggregation of ADP-stimulated platelets in the host. Cleaves adenosine triphosphate (ATP) and adenosine diphosphate (ADP) to adenosine monophosphate (AMP) and inorganic phosphate. Interacts with fibrinogen receptor integrin alpha-IIb/beta-3 (ITGA2B/ITGB3). This chain is 5'-nucleotidase-related protein, found in Glossina morsitans morsitans (Savannah tsetse fly).